Reading from the N-terminus, the 523-residue chain is Dynein regulatory complex subunit 3 (523 aa).

LRR repeat units lie at residues 44-65 (DVLSLQLDFQNILRIDNLWQFE), 66-87 (NLKKLQLNNNIIERIEGLTNLI), 88-109 (HLVWLDLSFNNIEAIEGLDTLV), 110-131 (NLEDLSLSNNRISKVDSLDALV), and 132-153 (KLQVLSLGNNQISNMMNIIYLR). One can recognise an LRRCT domain in the interval 166–204 (NPVSEAEEYKMFIYAYLSDLVYLDFRRVDEQMREMAKMK). Coiled coils occupy residues 204–242 (KHQYSIDELKHREAQLQMKLEEEQAKQEKLEEHKMAFVE) and 333–393 (LNLN…LVGL).

Belongs to the DRC3 family. In terms of assembly, component of the nexin-dynein regulatory complex (N-DRC). Interacts with DRC1. Interacts with TCTE1/DRC5. Interacts with DRC7.

It is found in the cytoplasm. The protein resides in the cytoskeleton. The protein localises to the cilium axoneme. Its subcellular location is the cell projection. It localises to the cilium. It is found in the flagellum axoneme. The protein resides in the flagellum. In terms of biological role, component of the nexin-dynein regulatory complex (N-DRC) a key regulator of ciliary/flagellar motility which maintains the alignment and integrity of the distal axoneme and regulates microtubule sliding in motile axonemes. In Mus musculus (Mouse), this protein is Dynein regulatory complex subunit 3 (Drc3).